The sequence spans 262 residues: (5R,7aS)-5-hydroxy-7a-methyl-1-oxo-2,3,5,6,7,7a-hexahydro-1H-indene-carboxyl-CoA reductase (262 aa).

Asp-50, Asp-77, Val-78, Asn-104, Tyr-170, Lys-174, and Ala-203 together coordinate NAD(+). Residue Tyr-170 is the Proton acceptor of the active site.

The protein belongs to the short-chain dehydrogenases/reductases (SDR) family.

It catalyses the reaction (5R,7aS)-5-hydroxy-7a-methyl-1-oxo-2,3,5,6,7,7a-hexahydro-1H-indene-carboxyl-CoA + NAD(+) = (7aS)-7a-methyl-1,5-dioxo-2,3,5,6,7,7a-hexahydro-1H-indene-carboxyl-CoA + NADH + H(+). It functions in the pathway steroid metabolism; cholesterol degradation. Requires the presence of IpdC. Involved in the final steps of cholesterol and steroid degradation. Probably catalyzes the oxidation of the 5-OH group of (5R,7aS)-5-hydroxy-7a-methyl-1-oxo-2,3,5,6,7,7a-hexahydro-1H-indene-carboxyl-CoA, leading to the formation of HIEC-CoA. The chain is (5R,7aS)-5-hydroxy-7a-methyl-1-oxo-2,3,5,6,7,7a-hexahydro-1H-indene-carboxyl-CoA reductase from Mycobacterium tuberculosis (strain ATCC 25618 / H37Rv).